The chain runs to 234 residues: UPF0502 protein Bphyt_5265 (234 aa).

The protein belongs to the UPF0502 family.

This Paraburkholderia phytofirmans (strain DSM 17436 / LMG 22146 / PsJN) (Burkholderia phytofirmans) protein is UPF0502 protein Bphyt_5265.